We begin with the raw amino-acid sequence, 185 residues long: Male-enhanced antigen 1 (185 aa).

Disordered stretches follow at residues 1-90 (MGPE…VGDG) and 104-134 (GLHL…IPMD). 2 stretches are compositionally biased toward acidic residues: residues 50–60 (SSEEPEEEQEE) and 112–121 (LESEDEDEEG). Serine 114 is modified (phosphoserine).

As to expression, highly expressed in testis.

Functionally, may play an important role in spermatogenesis and/or testis development. In Homo sapiens (Human), this protein is Male-enhanced antigen 1 (MEA1).